A 461-amino-acid polypeptide reads, in one-letter code: Probable tubulin polyglutamylase TTLL9 (461 aa).

The tract at residues 1–21 (MSRPKNQNYKGHGLQKGKERE) is disordered. The TTL domain maps to 22-402 (QRASIRFKTT…EARLTGREKR (381 aa)). ATP is bound by residues Lys-149 and 155 to 156 (QG). Gln-155 serves as a coordination point for a protein. The tract at residues 182–208 (SLEAQPARNTVNPSGSHDTRSSDDQKD) is disordered. The span at 188 to 197 (ARNTVNPSGS) shows a compositional bias: polar residues. Over residues 198-208 (HDTRSSDDQKD) the composition is skewed to basic and acidic residues. ATP is bound by residues 218–221 (QRYI) and 231–233 (KFD). Arg-257 serves as a coordination point for L-glutamate. 276–277 (TN) is a binding site for ATP. Residue Lys-294 coordinates L-glutamate. Mg(2+) contacts are provided by Asp-348, Glu-361, and Asn-363. L-glutamate is bound at residue Lys-379.

This sequence belongs to the tubulin--tyrosine ligase family. Requires Mg(2+) as cofactor.

It is found in the cytoplasm. The protein localises to the cytoskeleton. It localises to the cilium basal body. The protein resides in the flagellum axoneme. The enzyme catalyses (L-glutamyl)(n)-gamma-L-glutamyl-L-glutamyl-[protein] + L-glutamate + ATP = (L-glutamyl)(n+1)-gamma-L-glutamyl-L-glutamyl-[protein] + ADP + phosphate + H(+). Its function is as follows. Probable tubulin polyglutamylase that generates side chains of glutamate on the gamma-carboxyl group of specific glutamate residues within the C-terminal tail of target proteins. Similar to TTLL1, may acquire enzymatic activity only in complex with other proteins as it is most likely lacking domains important for autonomous activity. Mediates tubulin polyglutamylation which induces establishment of microtubule heterogeneity in sperm flagella, thereby playing a role in normal motile flagella axoneme structure and sperm flagella beating pattern. This is Probable tubulin polyglutamylase TTLL9 (TTLL9) from Bos taurus (Bovine).